The primary structure comprises 222 residues: Sortase A (222 aa).

The Cytoplasmic portion of the chain corresponds to 1–7 (MLKKTIA). A helical membrane pass occupies residues 8 to 28 (IIILIIGLLLIFSPFIKNGIV). Residues 29–222 (KYMSGHETIE…ELENKYFPSK (194 aa)) are Extracellular-facing. Residue histidine 127 is the Proton donor/acceptor of the active site. Cysteine 188 serves as the catalytic Acyl-thioester intermediate.

It belongs to the bacterial sortase family. Class A subfamily.

The protein resides in the cell membrane. Its activity is regulated as follows. Activity is enhanced by Zn(2+) and strongly enhanced by Ca(2+). Inhibited by chalcone, a precursor of several flavonoids, which blocks the SrtA active site. In terms of biological role, transpeptidase that anchors surface proteins to the cell wall. Recognizes and modifies its substrate by proteolytic cleavage of a C-terminal sorting signal. Following cleavage, a covalent intermediate is formed via a thioester bond between the sortase and its substrate, which is then transferred and covalently attached to the cell wall. This sortase recognizes a Leu-Pro-x-Thr-Gly (LPXTG) motif, which is cleaved by the sortase between the threonine and glycine residues. Involved in pathogenesis. May regulate the rate of synthesis and/or the stability of a subset of LPXTG proteins. Not involved in cell wall-anchoring of Hbp2 (SvpA) or Hbp1. This Listeria monocytogenes serovar 1/2a (strain ATCC BAA-679 / EGD-e) protein is Sortase A.